The chain runs to 306 residues: Ribose-5-phosphate isomerase (306 aa).

A disordered region spans residues 45–68 (GRAQFGVGSTSTSSGDANSVCPAP). A compositionally biased stretch (polar residues) spans 51 to 61 (VGSTSTSSGDA). Serine 102 carries the post-translational modification Phosphoserine.

Belongs to the ribose 5-phosphate isomerase family.

The catalysed reaction is aldehydo-D-ribose 5-phosphate = D-ribulose 5-phosphate. It functions in the pathway carbohydrate degradation; pentose phosphate pathway; D-ribose 5-phosphate from D-ribulose 5-phosphate (non-oxidative stage): step 1/1. The polypeptide is Ribose-5-phosphate isomerase (Sus scrofa (Pig)).